A 327-amino-acid chain; its full sequence is G-protein coupled receptor 55 (327 aa).

Over 1–20 the chain is Extracellular; that stretch reads MSQPERDNCSFDSVDKLTRT. N-linked (GlcNAc...) asparagine glycosylation occurs at Asn8. A helical membrane pass occupies residues 21 to 41; sequence LQLAVHIPTFLLGLVLNLLAI. Residues 42–57 are Cytoplasmic-facing; the sequence is RGFSAFLKKRKLDYIA. Residues 58–78 traverse the membrane as a helical segment; the sequence is TSIYMINLAVFDLLLVLSLPF. Over 79–93 the chain is Extracellular; sequence KMVLPQVESPLPSFC. A helical transmembrane segment spans residues 94–114; that stretch reads TLVECLYFISMYGSVFTICFI. At 115–136 the chain is on the cytoplasmic side; that stretch reads SLDRFLAIQYPILASHLRSPRK. A helical membrane pass occupies residues 137-157; it reads TFGICCIIWMLVWIGSIPIYT. Topologically, residues 158–179 are extracellular; that stretch reads FHREVERYKCFHNMSDVTWSAS. An N-linked (GlcNAc...) asparagine glycan is attached at Asn170. Residues 180-200 traverse the membrane as a helical segment; the sequence is VFFPLEIFGFLLPMGIMGFCS. Residues 201 to 239 lie on the Cytoplasmic side of the membrane; sequence YRSIHILLRRPDSTEDWVQQRDTKGWVQKRACIWTIATN. A helical membrane pass occupies residues 240–260; that stretch reads LVIFVVSFLPVHLGFFLQYLV. The Extracellular portion of the chain corresponds to 261-279; that stretch reads RNRFILDCRMKQGISLFLQ. A helical transmembrane segment spans residues 280 to 300; sequence LSLCFSNINCCLDVFCYYFVI. Over 301–327 the chain is Cytoplasmic; that stretch reads KEFRMRIKAHRPSTIKLVNQDTMVSRG.

It belongs to the G-protein coupled receptor 1 family. Highly expressed in splenic plasma cells.

It localises to the cell membrane. Its function is as follows. G-protein coupled receptor that binds to several ligands including 2-arachidonoyl lysophosphatidylinositol or lysophosphatidylglucoside with high affinity, leading to rapid and transient activation of numerous intracellular signaling pathways. Induces the Ca(2+) release from intracellular stores via ERK, the heterotrimeric G protein GNA13 and RHOA leading to morphological changes including cell rounding and stress fiber formation. In macrophages, acts downstream of lysophosphatidylglucoside to inhibit the translocation of the phospholipid-transporting ABCA1 to plasma membrane and subsequent cholesterol efflux leading to lipid accumulation and foam cell formation. May be involved in hyperalgesia associated with inflammatory and neuropathic pain. This Mus musculus (Mouse) protein is G-protein coupled receptor 55 (Gpr55).